The chain runs to 223 residues: Lipoprotein-releasing system ATP-binding protein LolD (223 aa).

The region spanning 2 to 223 (IQVRNLKKTF…LRDGEIVTCA (222 aa)) is the ABC transporter domain. 38–45 (GVSGAGKT) contributes to the ATP binding site.

This sequence belongs to the ABC transporter superfamily. Lipoprotein translocase (TC 3.A.1.125) family. The complex is composed of two ATP-binding proteins (LolD) and two transmembrane proteins (LolC and LolE).

The protein resides in the cell inner membrane. Functionally, part of the ABC transporter complex LolCDE involved in the translocation of mature outer membrane-directed lipoproteins, from the inner membrane to the periplasmic chaperone, LolA. Responsible for the formation of the LolA-lipoprotein complex in an ATP-dependent manner. The chain is Lipoprotein-releasing system ATP-binding protein LolD from Syntrophus aciditrophicus (strain SB).